Here is a 276-residue protein sequence, read N- to C-terminus: Small ribosomal subunit protein uS3 (276 aa).

Residues 39–110 (IRRETMKFLK…KINIKIKEIK (72 aa)) form the KH type-2 domain.

It belongs to the universal ribosomal protein uS3 family. Part of the 30S ribosomal subunit. Forms a tight complex with proteins S10 and S14.

Functionally, binds the lower part of the 30S subunit head. Binds mRNA in the 70S ribosome, positioning it for translation. The sequence is that of Small ribosomal subunit protein uS3 from Borrelia recurrentis (strain A1).